The chain runs to 336 residues: Tyrosine recombinase XerC (336 aa).

The 93-residue stretch at 14 to 106 folds into the Core-binding (CB) domain; sequence VANCRWLGEF…SVKSFYRFLL (93 aa). One can recognise a Tyr recombinase domain in the interval 127–330; the sequence is KIPDFLSEEE…TFNRLRDAYT (204 aa). Residues Arg183, Lys207, His282, Arg285, and His308 contribute to the active site. The active-site O-(3'-phospho-DNA)-tyrosine intermediate is the Tyr317.

Belongs to the 'phage' integrase family. XerC subfamily. In terms of assembly, forms a cyclic heterotetrameric complex composed of two molecules of XerC and two molecules of XerD.

Its subcellular location is the cytoplasm. In terms of biological role, site-specific tyrosine recombinase, which acts by catalyzing the cutting and rejoining of the recombining DNA molecules. The XerC-XerD complex is essential to convert dimers of the bacterial chromosome into monomers to permit their segregation at cell division. It also contributes to the segregational stability of plasmids. The chain is Tyrosine recombinase XerC from Chlorobaculum tepidum (strain ATCC 49652 / DSM 12025 / NBRC 103806 / TLS) (Chlorobium tepidum).